A 264-amino-acid polypeptide reads, in one-letter code: Thymidylate synthase (264 aa).

R21 is a binding site for dUMP. H51 is a binding site for (6R)-5,10-methylene-5,6,7,8-tetrahydrofolate. Residue 126–127 (RR) participates in dUMP binding. C146 serves as the catalytic Nucleophile. Residues 166 to 169 (RSAD), N177, and 207 to 209 (HLY) contribute to the dUMP site. A (6R)-5,10-methylene-5,6,7,8-tetrahydrofolate-binding site is contributed by D169. A263 serves as a coordination point for (6R)-5,10-methylene-5,6,7,8-tetrahydrofolate.

It belongs to the thymidylate synthase family. Bacterial-type ThyA subfamily. Homodimer.

Its subcellular location is the cytoplasm. The enzyme catalyses dUMP + (6R)-5,10-methylene-5,6,7,8-tetrahydrofolate = 7,8-dihydrofolate + dTMP. Its pathway is pyrimidine metabolism; dTTP biosynthesis. Its function is as follows. Catalyzes the reductive methylation of 2'-deoxyuridine-5'-monophosphate (dUMP) to 2'-deoxythymidine-5'-monophosphate (dTMP) while utilizing 5,10-methylenetetrahydrofolate (mTHF) as the methyl donor and reductant in the reaction, yielding dihydrofolate (DHF) as a by-product. This enzymatic reaction provides an intracellular de novo source of dTMP, an essential precursor for DNA biosynthesis. This chain is Thymidylate synthase, found in Bartonella henselae (strain ATCC 49882 / DSM 28221 / CCUG 30454 / Houston 1) (Rochalimaea henselae).